Reading from the N-terminus, the 710-residue chain is E3 ubiquitin-protein ligase TRIM9 (710 aa).

The segment at 10-50 (CPVCGSFYREPIILPCSHNICQACARNILVQTPESESPQSR) adopts an RING-type zinc-finger fold. Thr41 is modified (phosphothreonine). Ser44, Ser46, Ser49, and Ser53 each carry phosphoserine. 2 B box-type zinc fingers span residues 163-212 (AAAL…LVPP) and 224-266 (RKVS…VKAL). 8 residues coordinate Zn(2+): Cys168, Cys171, Cys193, His198, Cys229, His232, Cys252, and His258. A coiled-coil region spans residues 273 to 340 (HKSQLSQALN…KAQLLARVNK (68 aa)). One can recognise a COS domain in the interval 374-432 (IKENDPSGFLQISDALIRRVHLTEDQWGKGTLTPRMTTDFDLSLDNSPLLQSIHQLDFV). The region spanning 440-535 (VPATPILQLE…KTLVLQTSEV (96 aa)) is the Fibronectin type-III domain. The B30.2/SPRY domain occupies 533-702 (SEVAWFAFDP…LHTGLQVPDF (170 aa)).

This sequence belongs to the TRIM/RBCC family. As to quaternary structure, interacts with SNAP25. In terms of processing, auto-ubiquitinated.

The protein localises to the cytoplasm. The protein resides in the cell projection. Its subcellular location is the dendrite. It is found in the cytoplasmic vesicle. It localises to the secretory vesicle. The protein localises to the synaptic vesicle. The protein resides in the synapse. Its subcellular location is the cytoskeleton. The enzyme catalyses S-ubiquitinyl-[E2 ubiquitin-conjugating enzyme]-L-cysteine + [acceptor protein]-L-lysine = [E2 ubiquitin-conjugating enzyme]-L-cysteine + N(6)-ubiquitinyl-[acceptor protein]-L-lysine.. It participates in protein modification; protein ubiquitination. E3 ubiquitin-protein ligase which ubiquitinates itself in cooperation with an E2 enzyme UBE2D2/UBC4 and serves as a targeting signal for proteasomal degradation. May play a role in regulation of neuronal functions. May act as a regulator of synaptic vesicle exocytosis by controlling the availability of SNAP25 for the SNARE complex formation. The chain is E3 ubiquitin-protein ligase TRIM9 (TRIM9) from Bos taurus (Bovine).